We begin with the raw amino-acid sequence, 328 residues long: Phosphate acetyltransferase (328 aa).

Belongs to the phosphate acetyltransferase and butyryltransferase family.

Its subcellular location is the cytoplasm. The enzyme catalyses acetyl-CoA + phosphate = acetyl phosphate + CoA. The protein operates within metabolic intermediate biosynthesis; acetyl-CoA biosynthesis; acetyl-CoA from acetate: step 2/2. The polypeptide is Phosphate acetyltransferase (pta) (Staphylococcus aureus (strain MRSA252)).